The chain runs to 143 residues: MFMGEYHHNLDSKGRLIIPAKFRDEIGEKMVFTRGMEGCIFGYPIEEWQKIEAKLAKLPLTKRSARKFTRLFYSGAMESEFDKQGRVNLTMTLKEHAALIKECVIVGVSNRIEIWSAERWNDFSEEANENYDDIAEDLDDIEL.

2 SpoVT-AbrB domains span residues 5 to 47 (EYHH…PIEE) and 76 to 119 (AMES…SAER).

This sequence belongs to the MraZ family. In terms of assembly, forms oligomers.

The protein localises to the cytoplasm. Its subcellular location is the nucleoid. This Lactobacillus gasseri (strain ATCC 33323 / DSM 20243 / BCRC 14619 / CIP 102991 / JCM 1131 / KCTC 3163 / NCIMB 11718 / NCTC 13722 / AM63) protein is Transcriptional regulator MraZ.